Reading from the N-terminus, the 403-residue chain is Imidazolonepropionase (403 aa).

Residues His-74 and His-76 each coordinate Fe(3+). Residues His-74 and His-76 each coordinate Zn(2+). Residues Arg-83, Tyr-146, and His-179 each coordinate 4-imidazolone-5-propanoate. Tyr-146 lines the N-formimidoyl-L-glutamate pocket. A Fe(3+)-binding site is contributed by His-242. His-242 lines the Zn(2+) pocket. Gln-245 contacts 4-imidazolone-5-propanoate. Asp-317 contacts Fe(3+). Asp-317 provides a ligand contact to Zn(2+). N-formimidoyl-L-glutamate is bound by residues Asn-319 and Gly-321. Residue Thr-322 coordinates 4-imidazolone-5-propanoate.

This sequence belongs to the metallo-dependent hydrolases superfamily. HutI family. The cofactor is Zn(2+). Fe(3+) is required as a cofactor.

It is found in the cytoplasm. The catalysed reaction is 4-imidazolone-5-propanoate + H2O = N-formimidoyl-L-glutamate. Its pathway is amino-acid degradation; L-histidine degradation into L-glutamate; N-formimidoyl-L-glutamate from L-histidine: step 3/3. Functionally, catalyzes the hydrolytic cleavage of the carbon-nitrogen bond in imidazolone-5-propanoate to yield N-formimidoyl-L-glutamate. It is the third step in the universal histidine degradation pathway. The polypeptide is Imidazolonepropionase (Sphingopyxis alaskensis (strain DSM 13593 / LMG 18877 / RB2256) (Sphingomonas alaskensis)).